Reading from the N-terminus, the 362-residue chain is Methylthioribose-1-phosphate isomerase (362 aa).

Substrate-binding positions include 49–51 (RGA), Arg89, and Gln201. Catalysis depends on Asp242, which acts as the Proton donor. A substrate-binding site is contributed by 252–253 (NK).

This sequence belongs to the eIF-2B alpha/beta/delta subunits family. MtnA subfamily.

It catalyses the reaction 5-(methylsulfanyl)-alpha-D-ribose 1-phosphate = 5-(methylsulfanyl)-D-ribulose 1-phosphate. The protein operates within amino-acid biosynthesis; L-methionine biosynthesis via salvage pathway; L-methionine from S-methyl-5-thio-alpha-D-ribose 1-phosphate: step 1/6. Catalyzes the interconversion of methylthioribose-1-phosphate (MTR-1-P) into methylthioribulose-1-phosphate (MTRu-1-P). This Leptospira borgpetersenii serovar Hardjo-bovis (strain JB197) protein is Methylthioribose-1-phosphate isomerase.